The chain runs to 603 residues: Ribosome-inactivating protein PMRIPt (603 aa).

Positions 1–39 (MRVVAGILYIVVMAICGLGIQGGTLQDYPSVYFQDSTLQ) are cleaved as a signal peptide. 2 N-linked (GlcNAc...) asparagine glycosylation sites follow: Asn74 and Asn168. Glu208 is an active-site residue. Disulfide bonds link Cys297/Cys335, Cys351/Cys370, and Cys392/Cys409. 2 Ricin B-type lectin domains span residues 338–466 (GEPT…VGDD) and 467–593 (VEPI…WMTM). A 1-alpha repeat occupies 348-388 (DGLCMDVRNESNNDGIPIQLWPCGAQRNQQWTFHTDGTIQS). N-linked (GlcNAc...) asparagine glycosylation is found at Asn356 and Asn408. The 1-beta repeat unit spans residues 389–430 (MGKCMTSNGYHPGDYVMIFNCSTAPVPDATKWVVSIDGSITN). A 1-gamma repeat occupies 433–466 (SGLVLTAPQAAQTTILLVVRNTHSAKQGRSVGDD). The stretch at 478–516 (KYMCLQGNNENNTRVWLEDCAVDRPQQWWALYSDGTIRV) is one 2-alpha repeat. Intrachain disulfides connect Cys481/Cys497 and Cys523/Cys540. A glycan (N-linked (GlcNAc...) asparagine) is linked at Asn488. The stretch at 520–558 (RSLCVTSDGHSSRDAIIILTCDGGINQRLVFNTDGTILN) is one 2-beta repeat. Residues 561 to 597 (AQLVMDVRQSNVALRQIILYQPTGNPNQQWMTMITRT) form a 2-gamma repeat.

Belongs to the ribosome-inactivating protein family. Type 2 RIP subfamily. In terms of assembly, tetramer of four pairs of disulfide bound A-B chains. The precursor is processed in two chains, A and B, that are linked by a disulfide bond. In terms of processing, glycosylated. As to expression, expressed in rhizome and more abundantly in leaves (at protein level).

The catalysed reaction is Endohydrolysis of the N-glycosidic bond at one specific adenosine on the 28S rRNA.. Strongly inhibited by asialofetuin and asialomucin. GalNAc-specific agglutinin. Behaves as a type-2 ribosome-inactivating protein. Inhibits mammalian ribosomes. The A chain is responsible for inhibiting protein synthesis through the catalytic inactivation of 60S ribosomal subunits by removing adenine from position 4,324 of 28S rRNA. The B chain binds to cell receptors and probably facilitates the entry into the cell of the A chain; B chains are also responsible for cell agglutination (lectin activity). Involved in plant defense against insects. Has very low cytotoxic activity against the human tumor cell lines CEM and Molt4. In Polygonatum multiflorum (Solomon's seal), this protein is Ribosome-inactivating protein PMRIPt.